Reading from the N-terminus, the 420-residue chain is Vitellogenin-3 (420 aa).

The N-terminal stretch at 1 to 19 (MMSLRICLLATCLLVAAHA) is a signal peptide. Thr37 carries the phosphothreonine modification. Phosphoserine is present on residues Ser177 and Ser178. 2 positions are modified to sulfotyrosine: Tyr384 and Tyr390. The segment at 401-420 (GQRSPAHKQAAYHGMHHAQN) is disordered.

It belongs to the AB hydrolase superfamily. Lipase family. Tyrosine sulfation occurs in the female only and plays an essential functional role. As to expression, synthesized in the fat body and ovarian follicle cells and accumulate in the oocyte.

The protein localises to the secreted. Functionally, vitellogenin is the major yolk protein of eggs where it is used as a food source during embryogenesis. Vitellogenins and their receptor yl/yolkless are required for maintenance of microtubule plus-end orientation towards the posterior pole of oocytes. Involved in polarized localization of germ plasm components, such as osk mRNA and vas protein, to the oocyte posterior cortex. Receptor-mediated endocytosis by yl/yolkless is crucial for actin reorganization, mediated by osk isoform A/Long, required to anchor germ plasm components to the oocyte cortex. This Drosophila melanogaster (Fruit fly) protein is Vitellogenin-3 (Yp3).